A 190-amino-acid polypeptide reads, in one-letter code: Large ribosomal subunit protein eL19 (190 aa).

Disordered stretches follow at residues 56-85 (TVHSRSRARALKESKRAGRHMGYGKRKGTK) and 166-190 (NRAARERRQQRLAEKKEALFAEAAN). Over residues 72–83 (AGRHMGYGKRKG) the composition is skewed to basic residues. The segment covering 166-184 (NRAARERRQQRLAEKKEAL) has biased composition (basic and acidic residues).

Belongs to the eukaryotic ribosomal protein eL19 family. Component of the large ribosomal subunit. Mature ribosomes consist of a small (40S) and a large (60S) subunit. The 40S subunit contains about 32 different proteins and 1 molecule of RNA (18S). The 60S subunit contains 45 different proteins and 3 molecules of RNA (25S, 5.8S and 5S).

Its subcellular location is the cytoplasm. Functionally, component of the ribosome, a large ribonucleoprotein complex responsible for the synthesis of proteins in the cell. The small ribosomal subunit (SSU) binds messenger RNAs (mRNAs) and translates the encoded message by selecting cognate aminoacyl-transfer RNA (tRNA) molecules. The large subunit (LSU) contains the ribosomal catalytic site termed the peptidyl transferase center (PTC), which catalyzes the formation of peptide bonds, thereby polymerizing the amino acids delivered by tRNAs into a polypeptide chain. The nascent polypeptides leave the ribosome through a tunnel in the LSU and interact with protein factors that function in enzymatic processing, targeting, and the membrane insertion of nascent chains at the exit of the ribosomal tunnel. RPL19A may play a role in the last stages of translation initiation, in particular subunit joining and shedding/releasing factors. This is Large ribosomal subunit protein eL19 from Candida albicans (strain SC5314 / ATCC MYA-2876) (Yeast).